The sequence spans 769 residues: 5-methyltetrahydropteroyltriglutamate--homocysteine methyltransferase (769 aa).

Residues R16–K19 and K121 each bind 5-methyltetrahydropteroyltri-L-glutamate. Residues S415–T450 are disordered. Positions L439–Q449 are enriched in polar residues. L-homocysteine contacts are provided by residues I444 to S446 and E497. L-methionine contacts are provided by residues I444 to S446 and E497. Residues R528–C529 and W574 each bind 5-methyltetrahydropteroyltri-L-glutamate. D612 is an L-homocysteine binding site. Residue D612 participates in L-methionine binding. E618 lines the 5-methyltetrahydropteroyltri-L-glutamate pocket. Residues H654, C656, and E678 each coordinate Zn(2+). Residue H707 is the Proton donor of the active site. C739 serves as a coordination point for Zn(2+).

The protein belongs to the vitamin-B12 independent methionine synthase family. Requires Zn(2+) as cofactor.

The catalysed reaction is 5-methyltetrahydropteroyltri-L-glutamate + L-homocysteine = tetrahydropteroyltri-L-glutamate + L-methionine. It functions in the pathway amino-acid biosynthesis; L-methionine biosynthesis via de novo pathway; L-methionine from L-homocysteine (MetE route): step 1/1. Functionally, catalyzes the transfer of a methyl group from 5-methyltetrahydrofolate to homocysteine resulting in methionine formation. In Salinibacter ruber (strain DSM 13855 / M31), this protein is 5-methyltetrahydropteroyltriglutamate--homocysteine methyltransferase.